The primary structure comprises 441 residues: tRNA-2-methylthio-N(6)-dimethylallyladenosine synthase (441 aa).

The 117-residue stretch at 5–121 (KKLFIKTYGC…LPQMEARLRE (117 aa)) folds into the MTTase N-terminal domain. [4Fe-4S] cluster-binding residues include C14, C50, C84, C159, C163, and C166. Positions 145-380 (ARRAPSAFLT…TRQQQDIQQS (236 aa)) constitute a Radical SAM core domain. Positions 379–441 (QSMVGRDVSV…RNSLAAVTLA (63 aa)) constitute a TRAM domain.

Belongs to the methylthiotransferase family. MiaB subfamily. As to quaternary structure, monomer. [4Fe-4S] cluster serves as cofactor.

Its subcellular location is the cytoplasm. It carries out the reaction N(6)-dimethylallyladenosine(37) in tRNA + (sulfur carrier)-SH + AH2 + 2 S-adenosyl-L-methionine = 2-methylsulfanyl-N(6)-dimethylallyladenosine(37) in tRNA + (sulfur carrier)-H + 5'-deoxyadenosine + L-methionine + A + S-adenosyl-L-homocysteine + 2 H(+). Its function is as follows. Catalyzes the methylthiolation of N6-(dimethylallyl)adenosine (i(6)A), leading to the formation of 2-methylthio-N6-(dimethylallyl)adenosine (ms(2)i(6)A) at position 37 in tRNAs that read codons beginning with uridine. In Roseobacter denitrificans (strain ATCC 33942 / OCh 114) (Erythrobacter sp. (strain OCh 114)), this protein is tRNA-2-methylthio-N(6)-dimethylallyladenosine synthase.